A 217-amino-acid chain; its full sequence is MSSLYYANTLFSKYPASSSVFATGAFPEQTSCAFASNPQRPGYGAGSGASFAASMQGLYPGGGGMAGQSAAGVYAAGYGLEPSSFNMHCAPFEQNLSGVCPGDSAKAAGAKEQRDSDLAAESNFRIYPWMRSSGTDRKRGRQTYTRYQTLELEKEFHYNRYLTRRRRIEIAHTLCLTERQIKIWFQNRRMKWKKENKTAGPGTTGQDRAEAEEEEEE.

Positions Ile-126–Arg-131 match the Antp-type hexapeptide motif. Positions Arg-137–Asn-196 form a DNA-binding region, homeobox. Residues Lys-194–Glu-217 form a disordered region.

This sequence belongs to the Antp homeobox family. As to quaternary structure, forms a DNA-binding heterodimer with transcription factor PBX1.

The protein localises to the nucleus. Its function is as follows. Sequence-specific transcription factor which is part of a developmental regulatory system that provides cells with specific positional identities on the anterior-posterior axis. The protein is Homeobox protein Hox-B7 (HOXB7) of Homo sapiens (Human).